The chain runs to 789 residues: DNA topoisomerase 4 subunit A (789 aa).

The Topo IIA-type catalytic domain maps to L34–F499. Y122 (O-(5'-phospho-DNA)-tyrosine intermediate) is an active-site residue.

Belongs to the type II topoisomerase GyrA/ParC subunit family. ParC type 2 subfamily. In terms of assembly, heterotetramer composed of ParC and ParE.

It is found in the cell membrane. It carries out the reaction ATP-dependent breakage, passage and rejoining of double-stranded DNA.. Topoisomerase IV is essential for chromosome segregation. It relaxes supercoiled DNA. Performs the decatenation events required during the replication of a circular DNA molecule. In Mycoplasma pneumoniae (strain ATCC 29342 / M129 / Subtype 1) (Mycoplasmoides pneumoniae), this protein is DNA topoisomerase 4 subunit A.